The primary structure comprises 273 residues: Formamidopyrimidine-DNA glycosylase (273 aa).

Catalysis depends on proline 2, which acts as the Schiff-base intermediate with DNA. Glutamate 3 functions as the Proton donor in the catalytic mechanism. Catalysis depends on lysine 58, which acts as the Proton donor; for beta-elimination activity. Histidine 91 and arginine 110 together coordinate DNA. Residues 238–272 (QVYGKTGQPCPRCGCLIKKIKVGGRGTHYCPRCQC) form an FPG-type zinc finger. The active-site Proton donor; for delta-elimination activity is arginine 262.

Belongs to the FPG family. As to quaternary structure, monomer. It depends on Zn(2+) as a cofactor.

The enzyme catalyses Hydrolysis of DNA containing ring-opened 7-methylguanine residues, releasing 2,6-diamino-4-hydroxy-5-(N-methyl)formamidopyrimidine.. The catalysed reaction is 2'-deoxyribonucleotide-(2'-deoxyribose 5'-phosphate)-2'-deoxyribonucleotide-DNA = a 3'-end 2'-deoxyribonucleotide-(2,3-dehydro-2,3-deoxyribose 5'-phosphate)-DNA + a 5'-end 5'-phospho-2'-deoxyribonucleoside-DNA + H(+). Functionally, involved in base excision repair of DNA damaged by oxidation or by mutagenic agents. Acts as a DNA glycosylase that recognizes and removes damaged bases. Has a preference for oxidized purines, such as 7,8-dihydro-8-oxoguanine (8-oxoG). Has AP (apurinic/apyrimidinic) lyase activity and introduces nicks in the DNA strand. Cleaves the DNA backbone by beta-delta elimination to generate a single-strand break at the site of the removed base with both 3'- and 5'-phosphates. This chain is Formamidopyrimidine-DNA glycosylase, found in Streptococcus agalactiae serotype Ia (strain ATCC 27591 / A909 / CDC SS700).